A 191-amino-acid polypeptide reads, in one-letter code: MFSAQNKIHKDKGVAPTEFEERVAQAFFDLENTNQELKSDLKDLYINQAVSMDIAGNRKAVVIYVPFRLRKAFRKIHSRLVRELEKKFSGNDVIFVATRRIMRPPKKGSAVQRPRNRTLTSVHEAMLEDVAYPAEIVGKRTRYRVDGTKIMKVYLEPKERNNTEYKLETMVGVYRKLTGKDVVFEYPVADP.

Met1 carries the post-translational modification N-acetylmethionine.

The protein belongs to the eukaryotic ribosomal protein eS7 family.

The sequence is that of Small ribosomal subunit protein eS7 (RPS7) from Brassica oleracea (Wild cabbage).